Here is a 217-residue protein sequence, read N- to C-terminus: Adapter protein MecA (217 aa).

Belongs to the MecA family. Homodimer.

Its function is as follows. Enables the recognition and targeting of unfolded and aggregated proteins to the ClpC protease or to other proteins involved in proteolysis. The chain is Adapter protein MecA from Listeria monocytogenes serovar 1/2a (strain ATCC BAA-679 / EGD-e).